Consider the following 534-residue polypeptide: ATP-dependent rRNA helicase RRP3 (534 aa).

Positions 67 to 107 are disordered; the sequence is KQQALQKQQKQQKQQEQENANHNQTESSLSSSSSTTSSSIT. 2 stretches are compositionally biased toward low complexity: residues 68-80 and 91-107; these read QQAL…QQKQ and TESS…SSIT. A Q motif motif is present at residues 118-146; that stretch reads KTFKELNLVPDLLESIESMKFTKPTPIQS. Residues 149–320 enclose the Helicase ATP-binding domain; sequence IPHALEGKDI…RASLHNPVRV (172 aa). Position 162-169 (162-169) interacts with ATP; the sequence is AQTGSGKT. Residues 268-271 carry the DEAD box motif; sequence DEAD. In terms of domain architecture, Helicase C-terminal spans 347-492; sequence ILIHLLNEFM…EDKPPKEVLD (146 aa). 2 stretches are compositionally biased toward basic and acidic residues: residues 505-517 and 525-534; these read AIRQ…DKRN and NRDDADREER. The disordered stretch occupies residues 505-534; that stretch reads AIRQTKEIHDKRNGGGGRRRNRDDADREER.

It belongs to the DEAD box helicase family. DDX47/RRP3 subfamily. In terms of assembly, interacts with the SSU processome.

The protein resides in the nucleus. It carries out the reaction ATP + H2O = ADP + phosphate + H(+). ATP-dependent rRNA helicase required for pre-ribosomal RNA processing. Involved in the maturation of the 35S-pre-rRNA and to its cleavage to mature 18S rRNA. This Candida albicans (strain SC5314 / ATCC MYA-2876) (Yeast) protein is ATP-dependent rRNA helicase RRP3.